We begin with the raw amino-acid sequence, 166 residues long: Phosphopantetheine adenylyltransferase (166 aa).

Serine 11 contributes to the substrate binding site. ATP-binding positions include serine 11–phenylalanine 12 and histidine 19. Residues lysine 43, alanine 76, and arginine 90 each contribute to the substrate site. ATP contacts are provided by residues glycine 91 to arginine 93, glutamate 101, and leucine 126 to serine 132.

It belongs to the bacterial CoaD family. In terms of assembly, homohexamer. The cofactor is Mg(2+).

The protein resides in the cytoplasm. The catalysed reaction is (R)-4'-phosphopantetheine + ATP + H(+) = 3'-dephospho-CoA + diphosphate. It participates in cofactor biosynthesis; coenzyme A biosynthesis; CoA from (R)-pantothenate: step 4/5. In terms of biological role, reversibly transfers an adenylyl group from ATP to 4'-phosphopantetheine, yielding dephospho-CoA (dPCoA) and pyrophosphate. This is Phosphopantetheine adenylyltransferase from Streptococcus equi subsp. equi (strain 4047).